The following is a 319-amino-acid chain: Glutathione synthetase (319 aa).

In terms of domain architecture, ATP-grasp spans 127-311 (KIFVTEFADL…VASLLWDAIE (185 aa)). 153 to 209 (RNEMGDIILKPLYGNGGAGVFHSARDDRNFSSLLEMFGQMFREPYIAQEYLPDVRKG) contacts ATP. Mg(2+) contacts are provided by Glu282 and Asn284.

This sequence belongs to the prokaryotic GSH synthase family. Mg(2+) serves as cofactor. It depends on Mn(2+) as a cofactor.

The catalysed reaction is gamma-L-glutamyl-L-cysteine + glycine + ATP = glutathione + ADP + phosphate + H(+). It participates in sulfur metabolism; glutathione biosynthesis; glutathione from L-cysteine and L-glutamate: step 2/2. This is Glutathione synthetase from Agrobacterium fabrum (strain C58 / ATCC 33970) (Agrobacterium tumefaciens (strain C58)).